Here is a 227-residue protein sequence, read N- to C-terminus: MICOS complex subunit Mic19 (227 aa).

Gly-2 carries N-myristoyl glycine lipidation. Residue Ser-29 is modified to Phosphoserine. Residues 32–57 (VIDRMKESSPSGSKSQRYSSVYGASV) form a disordered region. The span at 39-50 (SSPSGSKSQRYS) shows a compositional bias: polar residues. A Phosphotyrosine modification is found at Tyr-49. 4 positions are modified to phosphoserine: Ser-50, Ser-51, Ser-56, and Ser-58. Residues 73-92 (EQAKKESEHQRRLKQARDLE) form a disordered region. Lys-142 is modified (N6-acetyllysine). The 43-residue stretch at 180–222 (HPVCADLQTKILQCYRQNTQQTLSCSALASQYMHCVNHAKQSM) folds into the CHCH domain. 2 short sequence motifs (cx9C motif) span residues 183–193 (CADLQTKILQC) and 204–214 (CSALASQYMHC). 2 disulfides stabilise this stretch: Cys-183/Cys-214 and Cys-193/Cys-204.

The protein belongs to the MICOS complex subunit Mic19 family. Metazoan Mic19 subfamily. As to quaternary structure, component of the mitochondrial contact site and cristae organizing system (MICOS) complex, composed of at least MICOS10/MIC10, CHCHD3/MIC19, CHCHD6/MIC25, APOOL/MIC27, IMMT/MIC60, APOO/MIC23/MIC26 and MICOS13/MIC13. This complex was also known under the names MINOS or MitOS complex. The MICOS complex associates with mitochondrial outer membrane proteins SAMM50, MTX1 and MTX2 (together described as components of the mitochondrial outer membrane sorting assembly machinery (SAM) complex) and DNAJC11, mitochondrial inner membrane protein TMEM11 and with HSPA9. The MICOS and SAM complexes together with DNAJC11 are part of a large protein complex spanning both membranes termed the mitochondrial intermembrane space bridging (MIB) complex. Interacts with HSPA1A/HSPA1B and OPA1, preferentially with the soluble OPA1 form.

The protein resides in the mitochondrion inner membrane. The protein localises to the cytoplasm. Its subcellular location is the nucleus. It localises to the mitochondrion. Its function is as follows. Component of the MICOS complex, a large protein complex of the mitochondrial inner membrane that plays crucial roles in the maintenance of crista junctions, inner membrane architecture, and formation of contact sites to the outer membrane. Has also been shown to function as a transcription factor which binds to the BAG1 promoter and represses BAG1 transcription. Plays an important role in the maintenance of the MICOS complex stability and the mitochondrial cristae morphology. This chain is MICOS complex subunit Mic19 (Chchd3), found in Mus musculus (Mouse).